Here is a 559-residue protein sequence, read N- to C-terminus: Urocanate hydratase (559 aa).

NAD(+) is bound by residues 49-50 (GG), Q127, 173-175 (GMG), D193, R198, 239-240 (NA), 260-264 (QTSAH), 270-271 (YL), and Y319. The active site involves C407. G489 is an NAD(+) binding site.

Belongs to the urocanase family. The cofactor is NAD(+).

It localises to the cytoplasm. It carries out the reaction 4-imidazolone-5-propanoate = trans-urocanate + H2O. The protein operates within amino-acid degradation; L-histidine degradation into L-glutamate; N-formimidoyl-L-glutamate from L-histidine: step 2/3. Functionally, catalyzes the conversion of urocanate to 4-imidazolone-5-propionate. This Shouchella clausii (strain KSM-K16) (Alkalihalobacillus clausii) protein is Urocanate hydratase.